The following is a 464-amino-acid chain: Argininosuccinate lyase (464 aa).

This sequence belongs to the lyase 1 family. Argininosuccinate lyase subfamily.

It localises to the cytoplasm. The catalysed reaction is 2-(N(omega)-L-arginino)succinate = fumarate + L-arginine. It functions in the pathway amino-acid biosynthesis; L-arginine biosynthesis; L-arginine from L-ornithine and carbamoyl phosphate: step 3/3. The polypeptide is Argininosuccinate lyase (Pseudomonas putida (strain GB-1)).